Consider the following 291-residue polypeptide: 4-hydroxy-tetrahydrodipicolinate synthase (291 aa).

Threonine 45 lines the pyruvate pocket. Tyrosine 133 serves as the catalytic Proton donor/acceptor. Catalysis depends on lysine 161, which acts as the Schiff-base intermediate with substrate. Isoleucine 203 lines the pyruvate pocket.

The protein belongs to the DapA family. Homotetramer.

Its subcellular location is the cytoplasm. It carries out the reaction L-aspartate 4-semialdehyde + pyruvate = (2S,4S)-4-hydroxy-2,3,4,5-tetrahydrodipicolinate + H2O + H(+). The protein operates within amino-acid biosynthesis; L-lysine biosynthesis via DAP pathway; (S)-tetrahydrodipicolinate from L-aspartate: step 3/4. With respect to regulation, is allosterically feedback inhibited by lysine; the N.meningitidis enzyme is significantly more sensitive to lysine than the E.coli enzyme. Shows substrate inhibition by (S)-ASA, with a Ki of 1.7 mM. Catalyzes the condensation of (S)-aspartate-beta-semialdehyde [(S)-ASA] and pyruvate to 4-hydroxy-tetrahydrodipicolinate (HTPA). This Neisseria meningitidis serogroup B (strain ATCC BAA-335 / MC58) protein is 4-hydroxy-tetrahydrodipicolinate synthase.